Here is a 1007-residue protein sequence, read N- to C-terminus: Ephrin type-A receptor 10 (1007 aa).

A signal peptide spans 1-22 (METGAGPHPLRLFVCLIPLCLA). The Extracellular portion of the chain corresponds to 23–565 (LLLGPGRPGT…APGSRDQSPA (543 aa)). The region spanning 35 to 216 (EVILLDSKAS…YYKQCRATVR (182 aa)) is the Eph LBD domain. Asparagine 311 carries an N-linked (GlcNAc...) asparagine glycan. Disordered stretches follow at residues 323 to 343 (ARSP…APRD) and 467 to 486 (PQSV…PGTN). Fibronectin type-III domains lie at 340–452 (APRD…TGPG) and 456–554 (EEDE…TPGE). An N-linked (GlcNAc...) asparagine glycan is attached at asparagine 486. Residues 566-586 (VVVTVVTISALLVLGSVMSVL) form a helical membrane-spanning segment. The Cytoplasmic segment spans residues 587–1007 (AIWRRPCDGK…LQLQGQGVQV (421 aa)). The region spanning 644–899 (VTLEKSLGAG…PRFSQIHSIL (256 aa)) is the Protein kinase domain. One can recognise an SAM domain in the interval 932–996 (PSFGSVGAWL…LSGISALQTR (65 aa)).

It belongs to the protein kinase superfamily. Tyr protein kinase family. Ephrin receptor subfamily. As to expression, expressed in the cochlea, in the organ of Corti, spiral ganglion, and stria vascularis.

The protein resides in the cell membrane. The catalysed reaction is L-tyrosyl-[protein] + ATP = O-phospho-L-tyrosyl-[protein] + ADP + H(+). Its function is as follows. Receptor for members of the ephrin-A family. Binds to EFNA3, EFNA4 and EFNA5. In Mus musculus (Mouse), this protein is Ephrin type-A receptor 10 (Epha10).